Here is a 568-residue protein sequence, read N- to C-terminus: MRLALWMYQGTAHHGVGRIANSMRGVHAVFHAPQGDDYVNPIFTMLERTPDFPRMTTSIVSGRDLAQGTVRLPETLRAVDAQVHPDLIIVCASCSTILLQEDLERMARSAGTSAEVLVYDANPYRMQEVRSADGLLTTLVQRFARPQAPLPTPSVNILGPASLGFHNRSDLICLRRMLATLGVQINVVAPLGASIHDLERLPAAWATIAPYRELGQNAARWLEDQFGIPALTDAPIGVQPTLRWLRRLVETLNEAGARLQRLSTPLRLPPLTAFSLDGMSAPSSVPWFARTADMESYSMKRAFVFGDATHTVGMVKFLRDELGMQIAGAGTYLEEEAEWVYQELKEYLPPDDSGSPKSSFLATDVFQHVARRIADLSPELVCGTQMERHACRKLDIPCLVIAPPTHIENHLLSYRPVLGFDGADVLADAVYTTATLGMEKHLIDMFGDAGLDYDEPQTGEPRTENQELRVENRASANGHPEAGVSVGAAEPSAAPSRSVVTEESNRATTPSSSTVHPVWTPDAQAMLKKIPFFVRGRVQKNVERYAMQHGYATITAEVLVEAREALGG.

Asp36 is a binding site for [4Fe-4S] cluster. Catalysis depends on Asp293, which acts as the Proton donor. 437-438 (GM) contributes to the substrate binding site. Residues 476 to 517 (ANGHPEAGVSVGAAEPSAAPSRSVVTEESNRATTPSSSTVHP) form a disordered region. The span at 498–515 (SVVTEESNRATTPSSSTV) shows a compositional bias: polar residues.

It belongs to the ChlB/BchB/BchZ family. As to quaternary structure, protochlorophyllide reductase is composed of three subunits; BchL, BchN and BchB. Forms a heterotetramer of two BchB and two BchN subunits. Requires [4Fe-4S] cluster as cofactor.

It carries out the reaction chlorophyllide a + oxidized 2[4Fe-4S]-[ferredoxin] + 2 ADP + 2 phosphate = protochlorophyllide a + reduced 2[4Fe-4S]-[ferredoxin] + 2 ATP + 2 H2O. Its pathway is porphyrin-containing compound metabolism; bacteriochlorophyll biosynthesis (light-independent). Functionally, component of the dark-operative protochlorophyllide reductase (DPOR) that uses Mg-ATP and reduced ferredoxin to reduce ring D of protochlorophyllide (Pchlide) to form chlorophyllide a (Chlide). This reaction is light-independent. The NB-protein (BchN-BchB) is the catalytic component of the complex. This Roseiflexus sp. (strain RS-1) protein is Light-independent protochlorophyllide reductase subunit B.